The sequence spans 462 residues: 2-amino-5-chloromuconic acid deaminase (462 aa).

Catalysis depends on charge relay system residues lysine 79 and serine 156. Serine 180 (acyl-ester intermediate) is an active-site residue.

Belongs to the amidase family.

The enzyme catalyses (2Z,4E)-2-aminomuconate + H2O = (3E)-2-oxohex-3-enedioate + NH4(+). Its pathway is xenobiotic degradation; nitrobenzene degradation. It participates in xenobiotic degradation; 4-chloronitrobenzene degradation. In terms of biological role, involved in the biodegradation of nitroaromatic and chlorinated nitroaromatic compounds. Catalyzes the conversion of 2-amino-5-chloromuconic acid into 2-hydroxy-5-chloromuconic acid and ammonia. Also able to catalyze the transformation of 2-aminomuconic acid into 2-hydroxymuconic acid. The sequence is that of 2-amino-5-chloromuconic acid deaminase from Comamonas testosteroni (Pseudomonas testosteroni).